A 404-amino-acid chain; its full sequence is Cysteine desulfurase IscS (404 aa).

Pyridoxal 5'-phosphate-binding positions include 75 to 76, Asn-155, Gln-183, and 203 to 205; these read AT and SAH. Lys-206 carries the N6-(pyridoxal phosphate)lysine modification. Thr-243 contributes to the pyridoxal 5'-phosphate binding site. Cys-328 acts as the Cysteine persulfide intermediate in catalysis. Cys-328 lines the [2Fe-2S] cluster pocket.

The protein belongs to the class-V pyridoxal-phosphate-dependent aminotransferase family. NifS/IscS subfamily. As to quaternary structure, homodimer. Forms a heterotetramer with IscU, interacts with other sulfur acceptors. The cofactor is pyridoxal 5'-phosphate.

It is found in the cytoplasm. The catalysed reaction is (sulfur carrier)-H + L-cysteine = (sulfur carrier)-SH + L-alanine. It participates in cofactor biosynthesis; iron-sulfur cluster biosynthesis. In terms of biological role, master enzyme that delivers sulfur to a number of partners involved in Fe-S cluster assembly, tRNA modification or cofactor biosynthesis. Catalyzes the removal of elemental sulfur atoms from cysteine to produce alanine. Functions as a sulfur delivery protein for Fe-S cluster synthesis onto IscU, an Fe-S scaffold assembly protein, as well as other S acceptor proteins. The chain is Cysteine desulfurase IscS from Pseudomonas syringae pv. syringae (strain B728a).